We begin with the raw amino-acid sequence, 98 residues long: uncharacterized protein (98 aa).

Belongs to the IS150/IS1296 orfA family.

This is an uncharacterized protein from Haemophilus influenzae (strain ATCC 51907 / DSM 11121 / KW20 / Rd).